The chain runs to 478 residues: Protein MAINTENANCE OF MERISTEMS (478 aa).

Positions 459-478 are disordered; it reads ASTTNKRKRREEQQQTDWSE. The Nuclear localization signal motif lies at 464–468; it reads KRKRR.

In terms of tissue distribution, expressed in root meristem, root vasculature, shoot apical meristem (SAM), leaf vasculature and ovules.

It localises to the nucleus. Functionally, required for the organization of the root apical meristem (RAM) and the shoot apical meristem (SAM). Required to maintain genome stability and cell division activity in meristematic cells. The protein is Protein MAINTENANCE OF MERISTEMS of Arabidopsis thaliana (Mouse-ear cress).